Reading from the N-terminus, the 740-residue chain is Alpha-1,6-mannosylglycoprotein 6-beta-N-acetylglucosaminyltransferase A (740 aa).

The Cytoplasmic portion of the chain corresponds to 1-13; sequence MAFFTPWKLSSQK. The chain crosses the membrane as a helical; Signal-anchor for type II membrane protein span at residues 14–30; that stretch reads LGFFLVTFGFIWGMMLL. Over 31-740 the chain is Lumenal; it reads HFTIQQRTQP…GQVALCKDCL (710 aa). Asn-109, Asn-114, and Asn-117 each carry an N-linked (GlcNAc...) asparagine glycan. 9 disulfide bridges follow: Cys-144–Cys-182, Cys-155–Cys-195, Cys-171–Cys-337, Cys-371–Cys-625, Cys-648–Cys-723, Cys-652–Cys-725, Cys-659–Cys-712, Cys-680–Cys-701, and Cys-736–Cys-739. The interval 212–740 is sufficient for catalytic activity; sequence NSLAEIRTDF…GQVALCKDCL (529 aa). Residue Asn-333 is glycosylated (N-linked (GlcNAc...) asparagine). Position 377 to 378 (377 to 378) interacts with substrate; the sequence is DS. N-linked (GlcNAc...) asparagine glycosylation is found at Asn-432 and Asn-446. Residue Glu-525 participates in UDP-N-acetyl-alpha-D-glucosamine binding. Lys-553 provides a ligand contact to substrate.

It belongs to the glycosyltransferase 18 family. In terms of processing, N-glycosylated. Post-translationally, a secreted form is released from the membrane after cleavage by gamma-secretase.

The protein localises to the golgi apparatus membrane. The protein resides in the secreted. It catalyses the reaction N(4)-{beta-D-GlcNAc-(1-&gt;2)-[beta-D-GlcNAc-(1-&gt;4)]-alpha-D-Man-(1-&gt;3)-[beta-D-GlcNAc-(1-&gt;2)-alpha-D-Man-(1-&gt;6)]-beta-D-Man-(1-&gt;4)-beta-D-GlcNAc-(1-&gt;4)-beta-D-GlcNAc}-L-asparaginyl-[protein] + UDP-N-acetyl-alpha-D-glucosamine = N(4)-{beta-D-GlcNAc-(1-&gt;2)-[beta-D-GlcNAc-(1-&gt;4)]-alpha-D-Man-(1-&gt;3)-[beta-D-GlcNAc-(1-&gt;2)-[beta-D-GlcNAc-(1-&gt;6)]-alpha-D-Man-(1-&gt;6)]-beta-D-Man-(1-&gt;4)-beta-D-GlcNAc-(1-&gt;4)-beta-D-GlcNAc}-L-asparaginyl-[protein] + UDP + H(+). It functions in the pathway protein modification; protein glycosylation. Functionally, catalyzes the addition of N-acetylglucosamine (GlcNAc) in beta 1-6 linkage to the alpha-linked mannose of biantennary N-linked oligosaccharides. Catalyzes an important step in the biosynthesis of branched, complex-type N-glycans, such as those found on EGFR, TGFR (TGF-beta receptor) and CDH2. Via its role in the biosynthesis of complex N-glycans, plays an important role in the activation of cellular signaling pathways, reorganization of the actin cytoskeleton, cell-cell adhesion and cell migration. MGAT5-dependent EGFR N-glycosylation enhances the interaction between EGFR and LGALS3 and thereby prevents rapid EGFR endocytosis and prolongs EGFR signaling. Required for efficient interaction between TGFB1 and its receptor. Enhances activation of intracellular signaling pathways by several types of growth factors, including FGF2, PDGF, IGF, TGFB1 and EGF. MGAT5-dependent CDH2 N-glycosylation inhibits CDH2-mediated homotypic cell-cell adhesion and contributes to the regulation of downstream signaling pathways. Promotes cell migration. Contributes to the regulation of the inflammatory response. MGAT5-dependent TCR N-glycosylation enhances the interaction between TCR and LGALS3, limits agonist-induced TCR clustering, and thereby dampens TCR-mediated responses to antigens. Required for normal leukocyte evasation and accumulation at sites of inflammation. Inhibits attachment of monocytes to the vascular endothelium and subsequent monocyte diapedesis. Its function is as follows. Promotes proliferation of umbilical vein endothelial cells and angiogenesis, at least in part by promoting the release of the growth factor FGF2 from the extracellular matrix. This chain is Alpha-1,6-mannosylglycoprotein 6-beta-N-acetylglucosaminyltransferase A (MGAT5), found in Cricetulus griseus (Chinese hamster).